A 278-amino-acid chain; its full sequence is 4-deoxy-L-threo-5-hexosulose-uronate ketol-isomerase (278 aa).

Residues His196, His198, Glu203, and His245 each coordinate Zn(2+).

This sequence belongs to the KduI family. Homohexamer. Zn(2+) serves as cofactor.

It catalyses the reaction 5-dehydro-4-deoxy-D-glucuronate = 3-deoxy-D-glycero-2,5-hexodiulosonate. It functions in the pathway glycan metabolism; pectin degradation; 2-dehydro-3-deoxy-D-gluconate from pectin: step 4/5. Functionally, catalyzes the isomerization of 5-dehydro-4-deoxy-D-glucuronate to 3-deoxy-D-glycero-2,5-hexodiulosonate. This is 4-deoxy-L-threo-5-hexosulose-uronate ketol-isomerase from Escherichia coli O127:H6 (strain E2348/69 / EPEC).